The following is a 745-amino-acid chain: AMP deaminase 1 (745 aa).

T79 is modified (phosphothreonine). Phosphoserine is present on S83. Phosphotyrosine is present on Y214. Zn(2+) is bound by residues H301 and H303. Residues H303 and 372 to 377 (KFNDKY) each bind substrate. S439 carries the phosphoserine modification. Residue H570 coordinates Zn(2+). E573 provides a ligand contact to substrate. H592 (proton acceptor) is an active-site residue. D647 provides a ligand contact to Zn(2+). A substrate-binding site is contributed by 648 to 651 (DPMQ).

Belongs to the metallo-dependent hydrolases superfamily. Adenosine and AMP deaminases family. In terms of assembly, homotetramer. It depends on Zn(2+) as a cofactor.

The enzyme catalyses AMP + H2O + H(+) = IMP + NH4(+). It participates in purine metabolism; IMP biosynthesis via salvage pathway; IMP from AMP: step 1/1. Its function is as follows. AMP deaminase plays a critical role in energy metabolism. This Mus musculus (Mouse) protein is AMP deaminase 1.